A 661-amino-acid chain; its full sequence is Junctophilin-1 (661 aa).

Topologically, residues 1 to 639 are cytoplasmic; the sequence is MTGGRFDFDD…EKEANSGPNS (639 aa). MORN repeat units follow at residues 14 to 36, 38 to 59, 60 to 82, 106 to 128, and 129 to 151; these read YCGG…KGQG, YSGS…SGNT, YQGY…KWMY, YEGT…DGGT, and YQGQ…PYGM. Phosphoserine occurs at positions 157, 216, and 220. The interval 228 to 247 is disordered; it reads SKSSISSKRSSVRSDAAMSR. MORN repeat units lie at residues 281–303 and 304–326; these read YMGE…NGMK and YEGE…DGSK. Residues 433–454 are compositionally biased toward basic and acidic residues; that stretch reads DAKENPEEKVPEKPPTPKESPH. Residues 433-631 form a disordered region; sequence DAKENPEEKV…SNDSCPALEK (199 aa). Position 448 is a phosphothreonine (T448). A Phosphoserine modification is found at S452. At T461 the chain carries Phosphothreonine. Phosphoserine is present on residues S465, S469, and S475. A compositionally biased stretch (basic and acidic residues) spans 599-613; it reads VAKESKAEPKAKKSE. The helical; Anchor for type IV membrane protein transmembrane segment at 640 to 660 threads the bilayer; sequence IMIVLVMLLNIGLAILFVHFL.

This sequence belongs to the junctophilin family. As to expression, abundantly expressed in skeletal muscle. Very low levels in heart.

Its subcellular location is the cell membrane. The protein resides in the endoplasmic reticulum membrane. It localises to the sarcoplasmic reticulum membrane. Functionally, junctophilins contribute to the formation of junctional membrane complexes (JMCs) which link the plasma membrane with the endoplasmic or sarcoplasmic reticulum in excitable cells. Provides a structural foundation for functional cross-talk between the cell surface and intracellular calcium release channels. JPH1 contributes to the construction of the skeletal muscle triad by linking the t-tubule (transverse-tubule) and SR (sarcoplasmic reticulum) membranes. The sequence is that of Junctophilin-1 (JPH1) from Homo sapiens (Human).